The chain runs to 737 residues: Tripartite terminase subunit 3 (737 aa).

Positions 188–194 (VKKRARI) match the Nuclear localization signal motif. The Walker A motif signature appears at 263-270 (VPRRHGKT). Positions 357 to 362 (LLFVDE) match the Walker B motif motif. Residue E362 is the For ATPase activity of the active site. Residues D517, E589, and D712 each act as for nuclease activity in the active site.

Belongs to the herpesviridae TRM3 protein family. Interacts with the terminase subunits TRM1 and TRM2. Interacts with portal protein.

It is found in the host nucleus. In terms of biological role, component of the molecular motor that translocates viral genomic DNA in empty capsid during DNA packaging. Forms a tripartite terminase complex together with TRM1 and TRM2 in the host cytoplasm. Once the complex reaches the host nucleus, it interacts with the capsid portal vertex. This portal forms a ring in which genomic DNA is translocated into the capsid. TRM3 carries an RNase H-like nuclease activity that plays an important role for the cleavage of concatemeric viral DNA into unit length genomes. This chain is Tripartite terminase subunit 3, found in Gallus gallus (Chicken).